We begin with the raw amino-acid sequence, 482 residues long: ATP-dependent rRNA helicase rrp3 (482 aa).

The interval 1-55 (MSSVKRRKTEKNTSSGLKSKQAKEPKEASPLSSPEPTEENQNNEIEEGTEEEEVT) is disordered. The span at 44–53 (EIEEGTEEEE) shows a compositional bias: acidic residues. The short motif at 56–84 (KSFKDLGIVDSLCEACDTLGYKAPTPIQR) is the Q motif element. Positions 87–258 (IPLALQGRDL…RASLKDPLRV (172 aa)) constitute a Helicase ATP-binding domain. ATP is bound at residue 100–107 (AETGSGKT). The DEAD box signature appears at 206 to 209 (DEAD). The Helicase C-terminal domain occupies 282 to 430 (HKDTYLIYLL…EYQTVKDEVM (149 aa)). 2 stretches are compositionally biased toward basic and acidic residues: residues 444–456 (RNEM…DRGK) and 472–482 (RGRDEMDREEG). The tract at residues 444 to 482 (RNEMKNLHEDRGKKGAVLKGRRPANGAKRGRDEMDREEG) is disordered.

It belongs to the DEAD box helicase family. DDX47/RRP3 subfamily. In terms of assembly, interacts with the SSU processome.

The protein localises to the nucleus. It catalyses the reaction ATP + H2O = ADP + phosphate + H(+). ATP-dependent rRNA helicase required for pre-ribosomal RNA processing. Involved in the maturation of the 35S-pre-rRNA and to its cleavage to mature 18S rRNA. This chain is ATP-dependent rRNA helicase rrp3, found in Sclerotinia sclerotiorum (strain ATCC 18683 / 1980 / Ss-1) (White mold).